Reading from the N-terminus, the 469-residue chain is Tetratricopeptide repeat protein 38 (469 aa).

A2 bears the N-acetylalanine mark. The residue at position 5 (S5) is a Phosphoserine. TPR repeat units follow at residues 108–141, 180–213, and 252–285; these read REQLHVSAVETFANGNFPKACELWEQILQDHPTD, SYVKGIYSFGLMETNFYDQAEKLAKEALSINPTD, and CHNYWHWALYLIEKGEYEAALTIYDTHILPSLQA.

The protein belongs to the TTC38 family.

In Homo sapiens (Human), this protein is Tetratricopeptide repeat protein 38 (TTC38).